The sequence spans 33 residues: Nigrocin-1 (33 aa).

Residues C27 and C33 are joined by a disulfide bond.

This sequence belongs to the frog skin active peptide (FSAP) family. Brevinin subfamily. As to expression, expressed by the skin dorsal glands.

It localises to the secreted. Functionally, shows antibacterial activity against both Gram-positive and Gram-negative bacteria and against the fungus C.albicans. Has no hemolytic activity. This is Nigrocin-1 from Pelophylax nigromaculatus (Black-spotted frog).